Here is a 384-residue protein sequence, read N- to C-terminus: MSVSCCCRNLGKTIKKAIPSHHLHLRSLGGSLYRRRIQSSSMETDLKSTFLNVYSVLKSDLLHDPSFEFTNESRLWVDRMLDYNVRGGKLNRGLSVVDSFKLLKQGNDLTEQEVFLSCALGWCIEWLQAYFLVLDDIMDNSVTRRGQPCWFRVPQVGMVAINDGILLRNHIHRILKKHFRDKPYYVDLVDLFNEVELQTACGQMIDLITTFEGEKDLAKYSLSIHRRIVQYKTAYYSFYLPVACALLMAGENLENHIDVKNVLVDMGIYFQVQDDYLDCFADPETLGKIGTDIEDFKCSWLVVKALERCSEEQTKILYENYGKPDPSNVAKVKDLYKELDLEGVFMEYESKSYEKLTGAIEGHQSKAIQAVLKSFLAKIYKRQK.

Residues K89, R92, and Q128 each contribute to the isopentenyl diphosphate site. Residues D135 and D139 each contribute to the Mg(2+) site. R144 lines the dimethylallyl diphosphate pocket. Position 145 (R145) interacts with isopentenyl diphosphate. Dimethylallyl diphosphate-binding residues include K232, T233, Q271, K288, and K297.

This sequence belongs to the FPP/GGPP synthase family. Mg(2+) is required as a cofactor. In terms of tissue distribution, the FPS1L mRNA accumulates preferentially in inflorescences, whereas the FPS1S mRNA is predominantly expressed in roots and inflorescences.

The protein localises to the mitochondrion. It is found in the cytoplasm. The catalysed reaction is isopentenyl diphosphate + dimethylallyl diphosphate = (2E)-geranyl diphosphate + diphosphate. The enzyme catalyses isopentenyl diphosphate + (2E)-geranyl diphosphate = (2E,6E)-farnesyl diphosphate + diphosphate. It functions in the pathway isoprenoid biosynthesis; farnesyl diphosphate biosynthesis; farnesyl diphosphate from geranyl diphosphate and isopentenyl diphosphate: step 1/1. Its pathway is isoprenoid biosynthesis; geranyl diphosphate biosynthesis; geranyl diphosphate from dimethylallyl diphosphate and isopentenyl diphosphate: step 1/1. Functionally, catalyzes the sequential condensation of isopentenyl pyrophosphate with the allylic pyrophosphates, dimethylallyl pyrophosphate, and then with the resultant geranylpyrophosphate to the ultimate product farnesyl pyrophosphate. This chain is Farnesyl pyrophosphate synthase 1, mitochondrial (FPS1), found in Arabidopsis thaliana (Mouse-ear cress).